The sequence spans 449 residues: MHDRTFHIETFGCQMNVNDSDWLARALMERGFSPAPFGEARLTIVNTCSVRDKPEQKVYSLLGRIRQATGKKPDAFVAVGGCVAQQIGSGFFSRFPQVRLVFGTDGLAMAPQALDRLVEEPDLKLSLLDFSEDYPERDAVLGQGAVPASVFVNIMQGCDNFCAYCIVPYTRGRQKSRATGTILDECRALLDRGAREITLLGQNVNSFGQDSHGDGTTFAQLLHKVAALPGLERLRFVTPHPKDIAPEVVEAFGTLPNLCPRLHLPLQAGSDRILKLMGRRYDMARYLRIVDDLRAARPDIVLSSDIIVGFPGETEEDFMETMGALETVGYAASYSFCYSDRPGTRAEMLPDKLSREVKLERLERLQTLQNRLTERCLQDMVGKKVEVLLEGMSRKPGDEGDSWQGRDPYGNLVNVALPQGSDVRGRFLPVVVAQAKKHSLLAEQAGAPW.

Positions 4 to 119 constitute an MTTase N-terminal domain; the sequence is RTFHIETFGC…APQALDRLVE (116 aa). Positions 13, 48, 82, 158, 162, and 165 each coordinate [4Fe-4S] cluster. One can recognise a Radical SAM core domain in the interval 144–375; sequence GAVPASVFVN…QTLQNRLTER (232 aa). In terms of domain architecture, TRAM spans 378 to 446; the sequence is QDMVGKKVEV…KHSLLAEQAG (69 aa).

This sequence belongs to the methylthiotransferase family. MiaB subfamily. As to quaternary structure, monomer. It depends on [4Fe-4S] cluster as a cofactor.

It localises to the cytoplasm. The catalysed reaction is N(6)-dimethylallyladenosine(37) in tRNA + (sulfur carrier)-SH + AH2 + 2 S-adenosyl-L-methionine = 2-methylsulfanyl-N(6)-dimethylallyladenosine(37) in tRNA + (sulfur carrier)-H + 5'-deoxyadenosine + L-methionine + A + S-adenosyl-L-homocysteine + 2 H(+). Its function is as follows. Catalyzes the methylthiolation of N6-(dimethylallyl)adenosine (i(6)A), leading to the formation of 2-methylthio-N6-(dimethylallyl)adenosine (ms(2)i(6)A) at position 37 in tRNAs that read codons beginning with uridine. This Nitratidesulfovibrio vulgaris (strain DP4) (Desulfovibrio vulgaris) protein is tRNA-2-methylthio-N(6)-dimethylallyladenosine synthase.